The sequence spans 144 residues: RxLR effector protein PITG_03192 (144 aa).

The signal sequence occupies residues 1–24 (MRVGFVFALLVVSVIVCFNGLTSA). The short motif at 49 to 58 (RNLRASGEER) is the RxLR-dEER element. An N-linked (GlcNAc...) asparagine glycan is attached at Asn115. Residues 122–142 (FFILATLVMFPIGVWAVVTNY) form a helical membrane-spanning segment.

It belongs to the RxLR effector family. As to quaternary structure, interacts with the C-terminal portions the ER-associated potato NAC transcription factors NTP1 and NTP2.

It localises to the secreted. The protein localises to the host endoplasmic reticulum membrane. Effector that is required for full virulence. Targets host NTP1 and NTP2 transcription factors and prevents their pathogen-associated molecular pattern (PAMP)-triggered re-localization from the endoplasmic reticulum into the nucleus, where they contribute to prevent disease progression by P.infestans. The polypeptide is RxLR effector protein PITG_03192 (Phytophthora infestans (strain T30-4) (Potato late blight agent)).